Here is a 370-residue protein sequence, read N- to C-terminus: Platelet-derived growth factor D (370 aa).

The signal sequence occupies residues 1-18 (MHRLIFVYTLICANFCSC). Positions 52 to 170 (RDETIQVKGN…PGFKIYYSLL (119 aa)) constitute a CUB domain. Cysteines 109 and 131 form a disulfide. Residue N276 is glycosylated (N-linked (GlcNAc...) asparagine). Intrachain disulfides connect C302-C360 and C306-C362.

It belongs to the PDGF/VEGF growth factor family. In terms of assembly, homodimer; disulfide-linked. Interacts with PDGFRB homodimers, and with heterodimers formed by PDGFRA and PDGFRB. Post-translationally, activated by proteolytic cleavage. Proteolytic removal of the N-terminal CUB domain releasing the core domain is necessary for unmasking the receptor-binding epitopes of the core domain. Cleavage after Arg-247 or Arg-249 by urokinase plasminogen activator gives rise to the active form. Expressed at high levels in the heart, pancreas, adrenal gland and ovary and at low levels in placenta, liver, kidney, prostate, testis, small intestine, spleen and colon. In the kidney, expressed by the visceral epithelial cells of the glomeruli. A widespread expression is also seen in the medial smooth muscle cells of arteries and arterioles, as well as in smooth muscle cells of vasa rectae in the medullary area. Expressed in the adventitial connective tissue surrounding the suprarenal artery. In chronic obstructive nephropathy, a persistent expression is seen in glomerular visceral epithelial cells and vascular smooth muscle cells, as well as de novo expression by periglomerular interstitial cells and by some neointimal cells of atherosclerotic vessels. Expression in normal prostate is seen preferentially in the mesenchyme of the gland while expression is increased and more profuse in prostate carcinoma. Expressed in many ovarian, lung, renal and brain cancer-derived cell lines.

The protein localises to the secreted. Its function is as follows. Growth factor that plays an essential role in the regulation of embryonic development, cell proliferation, cell migration, survival and chemotaxis. Potent mitogen for cells of mesenchymal origin. Plays an important role in wound healing. Induces macrophage recruitment, increased interstitial pressure, and blood vessel maturation during angiogenesis. Can initiate events that lead to a mesangial proliferative glomerulonephritis, including influx of monocytes and macrophages and production of extracellular matrix. In Homo sapiens (Human), this protein is Platelet-derived growth factor D (PDGFD).